The chain runs to 181 residues: Oligoribonuclease (181 aa).

The 164-residue stretch at 8–171 (LIWIDLEMTG…DDIRESVAEL (164 aa)) folds into the Exonuclease domain. Tyr-129 is a catalytic residue.

This sequence belongs to the oligoribonuclease family.

It localises to the cytoplasm. 3'-to-5' exoribonuclease specific for small oligoribonucleotides. In Enterobacter sp. (strain 638), this protein is Oligoribonuclease.